We begin with the raw amino-acid sequence, 259 residues long: Phosphatidylglycerol--prolipoprotein diacylglyceryl transferase (259 aa).

4 helical membrane passes run 12 to 32, 41 to 61, 80 to 100, and 109 to 129; these read LAIHWYALCILSGLVLAVYLA, ISSDAIFDFILIAFPLAIVGA, IIAIWNGGIAIYGGLITGALV, and VLNPIHFLDIAAPSVMAAQAI. Arg-131 serves as a coordination point for a 1,2-diacyl-sn-glycero-3-phospho-(1'-sn-glycerol). The next 3 helical transmembrane spans lie at 167-187, 194-214, and 226-246; these read IPTFLYESFWNLLGFVIIMMW, LLDGEIFAFYLIWYGSGRLVI, and GIRISQYVSALLIIIGLIFVI.

It belongs to the Lgt family.

Its subcellular location is the cell membrane. The enzyme catalyses L-cysteinyl-[prolipoprotein] + a 1,2-diacyl-sn-glycero-3-phospho-(1'-sn-glycerol) = an S-1,2-diacyl-sn-glyceryl-L-cysteinyl-[prolipoprotein] + sn-glycerol 1-phosphate + H(+). It participates in protein modification; lipoprotein biosynthesis (diacylglyceryl transfer). Functionally, catalyzes the transfer of the diacylglyceryl group from phosphatidylglycerol to the sulfhydryl group of the N-terminal cysteine of a prolipoprotein, the first step in the formation of mature lipoproteins. The polypeptide is Phosphatidylglycerol--prolipoprotein diacylglyceryl transferase (Streptococcus pyogenes serotype M3 (strain ATCC BAA-595 / MGAS315)).